A 368-amino-acid chain; its full sequence is Phospho-N-acetylmuramoyl-pentapeptide-transferase (368 aa).

The next 9 membrane-spanning stretches (helical) occupy residues 23–43, 72–92, 98–118, 139–159, 170–190, 201–221, 238–258, 281–301, and 345–365; these read YLTFRASAAAITALLIIIFAG, VPTMGGLMIIFAIEVSAFLWA, HVWLIMLAVFWMGLIGFIDDY, VTLGLVIGFYTWNDPVFSVLL, LSVDYGIFYIPVVIFIITAVS, GLAAGNAAIVTFALGVFAYLC, AGEVAVVSMAIVMACVGFLWF, VIALMIKQELLLPVLAGVFFV, and KIVIRFWIISILLFLTSLMTL.

This sequence belongs to the glycosyltransferase 4 family. MraY subfamily. The cofactor is Mg(2+).

The protein resides in the cell inner membrane. It carries out the reaction UDP-N-acetyl-alpha-D-muramoyl-L-alanyl-gamma-D-glutamyl-meso-2,6-diaminopimeloyl-D-alanyl-D-alanine + di-trans,octa-cis-undecaprenyl phosphate = di-trans,octa-cis-undecaprenyl diphospho-N-acetyl-alpha-D-muramoyl-L-alanyl-D-glutamyl-meso-2,6-diaminopimeloyl-D-alanyl-D-alanine + UMP. It functions in the pathway cell wall biogenesis; peptidoglycan biosynthesis. Functionally, catalyzes the initial step of the lipid cycle reactions in the biosynthesis of the cell wall peptidoglycan: transfers peptidoglycan precursor phospho-MurNAc-pentapeptide from UDP-MurNAc-pentapeptide onto the lipid carrier undecaprenyl phosphate, yielding undecaprenyl-pyrophosphoryl-MurNAc-pentapeptide, known as lipid I. This is Phospho-N-acetylmuramoyl-pentapeptide-transferase from Chlorobaculum tepidum (strain ATCC 49652 / DSM 12025 / NBRC 103806 / TLS) (Chlorobium tepidum).